The following is a 634-amino-acid chain: Chaperone protein HtpG (634 aa).

Residues 1-342 are a; substrate-binding; that stretch reads MTVDTDKQTL…SSDLSLNVSR (342 aa). The segment at 343–559 is b; that stretch reads EILQSGPVVD…QGDLGLQMRQ (217 aa). The tract at residues 560-634 is c; it reads LLEASGQAVP…LNKLLLELSV (75 aa).

It belongs to the heat shock protein 90 family. Homodimer.

Its subcellular location is the cytoplasm. Molecular chaperone. Has ATPase activity. This Xanthomonas oryzae pv. oryzae (strain MAFF 311018) protein is Chaperone protein HtpG.